The primary structure comprises 201 residues: RILP-like protein 2 (201 aa).

The region spanning 14–108 is the RH1 domain; the sequence is GPEIALDKDP…LKDGPQMGVG (95 aa). A coiled-coil region spans residues 67-155; it reads LEMLEALVNQ…AQDELQCYKS (89 aa). The 77-residue stretch at 121-197 folds into the RH2 domain; that stretch reads RPRFTLQELR…TVKSLFSFKQ (77 aa). The tract at residues 177–201 is disordered; the sequence is SPRENESKEKSTVKSLFSFKQGKQT. Basic and acidic residues predominate over residues 179–188; the sequence is RENESKEKST.

The protein belongs to the RILPL family.

The protein localises to the cytoplasm. Its subcellular location is the cytosol. The protein resides in the cytoskeleton. It is found in the microtubule organizing center. It localises to the centrosome. The protein localises to the cell projection. Its subcellular location is the cilium. Its function is as follows. Involved in cell shape and neuronal morphogenesis, positively regulating the establishment and maintenance of dendritic spines. Plays a role in cellular protein transport. In Xenopus tropicalis (Western clawed frog), this protein is RILP-like protein 2 (rilpl2).